Reading from the N-terminus, the 332-residue chain is Holliday junction branch migration complex subunit RuvB (332 aa).

A large ATPase domain (RuvB-L) region spans residues 1 to 181 (MERIISELEM…FGVSHKMEYY (181 aa)). ATP-binding residues include leucine 20, arginine 21, glycine 62, lysine 65, threonine 66, threonine 67, arginine 171, tyrosine 181, and arginine 218. Threonine 66 is a Mg(2+) binding site. The small ATPAse domain (RuvB-S) stretch occupies residues 182-252 (NENEIKSIII…SAKNALDMLG (71 aa)). A head domain (RuvB-H) region spans residues 255–332 (SNGLDDLDRN…QHFKKVEVKI (78 aa)). DNA-binding residues include arginine 291, arginine 310, and arginine 315.

It belongs to the RuvB family. Homohexamer. Forms an RuvA(8)-RuvB(12)-Holliday junction (HJ) complex. HJ DNA is sandwiched between 2 RuvA tetramers; dsDNA enters through RuvA and exits via RuvB. An RuvB hexamer assembles on each DNA strand where it exits the tetramer. Each RuvB hexamer is contacted by two RuvA subunits (via domain III) on 2 adjacent RuvB subunits; this complex drives branch migration. In the full resolvosome a probable DNA-RuvA(4)-RuvB(12)-RuvC(2) complex forms which resolves the HJ.

The protein resides in the cytoplasm. The catalysed reaction is ATP + H2O = ADP + phosphate + H(+). Functionally, the RuvA-RuvB-RuvC complex processes Holliday junction (HJ) DNA during genetic recombination and DNA repair, while the RuvA-RuvB complex plays an important role in the rescue of blocked DNA replication forks via replication fork reversal (RFR). RuvA specifically binds to HJ cruciform DNA, conferring on it an open structure. The RuvB hexamer acts as an ATP-dependent pump, pulling dsDNA into and through the RuvAB complex. RuvB forms 2 homohexamers on either side of HJ DNA bound by 1 or 2 RuvA tetramers; 4 subunits per hexamer contact DNA at a time. Coordinated motions by a converter formed by DNA-disengaged RuvB subunits stimulates ATP hydrolysis and nucleotide exchange. Immobilization of the converter enables RuvB to convert the ATP-contained energy into a lever motion, pulling 2 nucleotides of DNA out of the RuvA tetramer per ATP hydrolyzed, thus driving DNA branch migration. The RuvB motors rotate together with the DNA substrate, which together with the progressing nucleotide cycle form the mechanistic basis for DNA recombination by continuous HJ branch migration. Branch migration allows RuvC to scan DNA until it finds its consensus sequence, where it cleaves and resolves cruciform DNA. The polypeptide is Holliday junction branch migration complex subunit RuvB (Fusobacterium nucleatum subsp. nucleatum (strain ATCC 25586 / DSM 15643 / BCRC 10681 / CIP 101130 / JCM 8532 / KCTC 2640 / LMG 13131 / VPI 4355)).